Consider the following 814-residue polypeptide: Leucine--tRNA ligase (814 aa).

A 'HIGH' region motif is present at residues 42 to 52 (PYPSGNLHIGH). Residues 582 to 586 (KMSKS) carry the 'KMSKS' region motif. Residue K585 participates in ATP binding.

The protein belongs to the class-I aminoacyl-tRNA synthetase family.

Its subcellular location is the cytoplasm. It carries out the reaction tRNA(Leu) + L-leucine + ATP = L-leucyl-tRNA(Leu) + AMP + diphosphate. This is Leucine--tRNA ligase from Herpetosiphon aurantiacus (strain ATCC 23779 / DSM 785 / 114-95).